The primary structure comprises 367 residues: Alginate lyase (367 aa).

Residues 1 to 24 form the signal peptide; it reads MTIINRKTAPALLALALFGGAAQA. Substrate contacts are provided by residues 63–64, 136–137, and Tyr-254; these read SK and HT.

It belongs to the polysaccharide lyase 5 family.

Its subcellular location is the periplasm. It catalyses the reaction Eliminative cleavage of alginate to give oligosaccharides with 4-deoxy-alpha-L-erythro-hex-4-enuronosyl groups at their non-reducing ends and beta-D-mannuronate at their reducing end.. Functionally, catalyzes the depolymerization of alginate by cleaving the beta-1,4 glycosidic bond between two adjacent sugar residues via a beta-elimination mechanism. May serve to degrade mislocalized alginate that is trapped in the periplasmic space. The chain is Alginate lyase from Pseudomonas entomophila (strain L48).